Consider the following 1065-residue polypeptide: Cellulose synthase A catalytic subunit 3 [UDP-forming] (1065 aa).

Over 1–260 (MESEGETAGK…PSSRINPYRM (260 aa)) the chain is Cytoplasmic. Phosphoserine is present on Ser3. Zn(2+)-binding residues include Cys20, Cys23, Cys39, Cys42, Cys47, Cys50, Cys62, and Cys65. The RING-type; degenerate zinc finger occupies 20-66 (CQICSDNVGKTVDGDRFVACDICSFPVCRPCYEYERKDGNQSCPQCK). A phosphoserine mark is found at Ser151, Ser211, and Ser216. The helical transmembrane segment at 261–281 (VIMLRLVILCLFLHYRITNPV) threads the bilayer. Topologically, residues 282–283 (PN) are extracellular. Residues 284-304 (AFALWLVSVICEIWFALSWIL) form a helical membrane-spanning segment. At 305 to 842 (DQFPKWFPVN…LERFAYVNTT (538 aa)) the chain is on the cytoplasmic side. Positions 343, 349, 350, and 379 each coordinate UDP-alpha-D-glucose. Asp379 is a catalytic residue. Residues 433–457 (VKDRRAMKREYEEFKIRINALVSKA) adopt a coiled-coil conformation. Residue Lys520 coordinates UDP-alpha-D-glucose. Lys521 and Asp545 together coordinate Mn(2+). The interval 643 to 672 (SKLCGGSRKKNSKAKKESDKKKSGRHTDST) is disordered. Residues 656–670 (AKKESDKKKSGRHTD) show a composition bias toward basic and acidic residues. Asp765 is an active-site residue. A helical transmembrane segment spans residues 843 to 863 (IYPITSIPLLMYCTLPAVCLF). At 864–874 (TNQFIIPQISN) the chain is on the extracellular side. A helical membrane pass occupies residues 875–895 (IASIWFLSLFLSIFATGILEM). The Cytoplasmic portion of the chain corresponds to 896 to 910 (RWSGVGIDEWWRNEQ). A helical transmembrane segment spans residues 911–931 (FWVIGGVSAHLFAVFQGILKV). Residues 932 to 961 (LAGIDTNFTVTSKASDEDGDFAELYLFKWT) lie on the Extracellular side of the membrane. Residue Asn938 is glycosylated (N-linked (GlcNAc...) asparagine). Residues 962-982 (TLLIPPTTLLIVNLVGVVAGV) form a helical membrane-spanning segment. At 983 to 993 (SYAINSGYQSW) the chain is on the cytoplasmic side. The chain crosses the membrane as a helical span at residues 994-1014 (GPLFGKLFFAFWVIVHLYPFL). The Extracellular portion of the chain corresponds to 1015–1023 (KGLMGRQNR). The helical transmembrane segment at 1024–1044 (TPTIVVVWSVLLASIFSLLWV) threads the bilayer. Residues 1045 to 1065 (RIDPFTSRVTGPDILECGINC) lie on the Cytoplasmic side of the membrane.

Belongs to the glycosyltransferase 2 family. Plant cellulose synthase subfamily. In terms of assembly, homodimer. Interacts with CESA1 and CESA6. Interacts with STL1 and STL2, but not with GOT1. Binds to CSI1 and CSI3. Interacts with PAT24/TIP1. Zn(2+) is required as a cofactor. It depends on Mn(2+) as a cofactor. Palmitoylated, in part by PAT24/TIP1. Expressed in young plants, flowers and roots, and to a lower extent in leaves and stems. Localized in all cells except meristematic cells. Accumulates particularly in root caps, root hairs, epidermal layer, midveins of leaves and anthers. Not present in old tissues.

It is found in the cell membrane. It localises to the golgi apparatus membrane. The catalysed reaction is [(1-&gt;4)-beta-D-glucosyl](n) + UDP-alpha-D-glucose = [(1-&gt;4)-beta-D-glucosyl](n+1) + UDP + H(+). Its pathway is glycan metabolism; plant cellulose biosynthesis. Catalytic subunit of cellulose synthase terminal complexes ('rosettes'), required for beta-1,4-glucan microfibril crystallization, a major mechanism of the cell wall formation. Involved in the primary cell wall formation, especially in roots. In Arabidopsis thaliana (Mouse-ear cress), this protein is Cellulose synthase A catalytic subunit 3 [UDP-forming].